A 268-amino-acid chain; its full sequence is Undecaprenyl-diphosphatase (268 aa).

The next 7 helical transmembrane spans lie at 43–63 (FWNT…VVIY), 83–103 (FVIG…IAGK), 109–129 (LFNP…LMWV), 144–164 (FPLP…IPGV), 184–204 (AAEF…AYDF), 218–238 (IVAI…KAFL), and 246–266 (FTFF…ALAL).

The protein belongs to the UppP family.

Its subcellular location is the cell inner membrane. The enzyme catalyses di-trans,octa-cis-undecaprenyl diphosphate + H2O = di-trans,octa-cis-undecaprenyl phosphate + phosphate + H(+). Functionally, catalyzes the dephosphorylation of undecaprenyl diphosphate (UPP). Confers resistance to bacitracin. The chain is Undecaprenyl-diphosphatase from Nitrobacter hamburgensis (strain DSM 10229 / NCIMB 13809 / X14).